The chain runs to 216 residues: Transmembrane protein 125 (216 aa).

4 helical membrane-spanning segments follow: residues 32 to 52 (LLCFSVAVILVAGCGAGGVAL), 65 to 85 (LAVGTVLCLLALLVLVKQLMS), 111 to 131 (AVVVLLSGFVLLVTGLTLAGL), and 144 to 164 (MLSVGITLASLGSVLLLGLLL).

The protein resides in the membrane. This Mus musculus (Mouse) protein is Transmembrane protein 125 (Tmem125).